We begin with the raw amino-acid sequence, 785 residues long: MSDQDHSMDEMTAVVKIEKGVGGNNGGNGNGGGAFSQARSSSTGSSSSTGGGGQESQPSPLALLAATCSRIESPNENSNNSQGPSQSGGTGELDLTATQLSQGANGWQIISSSSGATPTSKEQSGSSTNGSNGSESSKNRTVSGGQYVVAAAPNLQNQQVLTGLPGVMPNIQYQVIPQFQTVDGQQLQFAATGAQVQQDGSGQIQIIPGANQQIITNRGSGGNIIAAMPNLLQQAVPLQGLANNVLSGQTQYVTNVPVALNGNITLLPVNSVSAATLTPSSQAVTISSSGSQESGSQPVTSGTTISSASLVSSQASSSSFFTNANSYSTTTTTSNMGIMNFTTSGSSGTNSQGQTPQRVSGLQGSDALNIQQNQTSGGSLQAGQQKEGEQNQQTQQQQILIQPQLVQGGQALQALQAAPLSGQTFTTQAISQETLQNLQLQAVPNSGPIIIRTPTVGPNGQVSWQTLQLQNLQVQNPQAQTITLAPMQGVSLGQTSSSNTTLTPIASAASIPAGTVTVNAAQLSSMPGLQTINLSALGTSGIQVHPIQGLPLAIANAPGDHGAQLGLHGAGGDGIHDDTAGGEEGENSPDAQPQAGRRTRREACTCPYCKDSEGRGSGDPGKKKQHICHIQGCGKVYGKTSHLRAHLRWHTGERPFMCTWSYCGKRFTRSDELQRHKRTHTGEKKFACPECPKRFMRSDHLSKHIKTHQNKKGGPGVALSVGTLPLDSGAGSEGSGTATPSALITTNMVAMEAICPEGIARLANSGINVMQVADLQSINISGNGF.

The interval 1–93 is disordered; that stretch reads MSDQDHSMDE…PSQSGGTGEL (93 aa). Ser-2 is subject to N-acetylserine. Phosphoserine occurs at positions 2 and 7. Positions 2 to 82 are repressor domain; it reads SDQDHSMDEM…SPNENSNNSQ (81 aa). Lys-16 participates in a covalent cross-link: Glycyl lysine isopeptide (Lys-Gly) (interchain with G-Cter in SUMO); alternate. Lys-16 is covalently cross-linked (Glycyl lysine isopeptide (Lys-Gly) (interchain with G-Cter in SUMO2); alternate). Residues 20 to 34 show a composition bias toward gly residues; it reads GVGGNNGGNGNGGGA. Position 59 is a phosphoserine (Ser-59). Low complexity predominate over residues 72-85; the sequence is ESPNENSNNSQGPS. Residue Ser-101 is modified to Phosphoserine; by ATM. Residues 109-123 are compositionally biased toward polar residues; it reads IISSSSGATPTSKEQ. A disordered region spans residues 109 to 141; it reads IISSSSGATPTSKEQSGSSTNGSNGSESSKNRT. Low complexity predominate over residues 124-136; sequence SGSSTNGSNGSES. Positions 146–251 are transactivation domain A (Gln-rich); the sequence is QYVVAAAPNL…ANNVLSGQTQ (106 aa). A transactivation domain B (Gln-rich) region spans residues 261–495; that stretch reads NGNITLLPVN…PMQGVSLGQT (235 aa). Phosphothreonine; by MAPK8 is present on Thr-278. Positions 329–395 are disordered; it reads TTTTTSNMGI…KEGEQNQQTQ (67 aa). Residues 342–357 are compositionally biased toward low complexity; the sequence is TTSGSSGTNSQGQTPQ. A compositionally biased stretch (polar residues) spans 358-379; the sequence is RVSGLQGSDALNIQQNQTSGGS. The span at 381-395 shows a compositional bias: low complexity; that stretch reads QAGQQKEGEQNQQTQ. The residue at position 453 (Thr-453) is a Phosphothreonine; by MAPK1 and MAPK3. Positions 462-470 match the 9aaTAD motif; sequence VSWQTLQLQ. Ser-491 carries an O-linked (GlcNAc) serine glycan. The interval 496-610 is transactivation domain C (highly charged); it reads SSSNTTLTPI…REACTCPYCK (115 aa). A disordered region spans residues 567-598; sequence LHGAGGDGIHDDTAGGEEGENSPDAQPQAGRR. At Ser-612 the chain carries Phosphoserine; alternate. An O-linked (GlcNAc) serine; alternate glycan is attached at Ser-612. The interval 619-785 is VZV IE62-binding; that stretch reads DPGKKKQHIC…QSINISGNGF (167 aa). The segment at 626 to 650 adopts a C2H2-type 1 zinc-finger fold; it reads HICHIQGCGKVYGKTSHLRAHLRWH. Thr-640 bears the Phosphothreonine; alternate mark. O-linked (GlcNAc) threonine; alternate glycosylation is present at Thr-640. A glycan (O-linked (GlcNAc) serine; alternate) is linked at Ser-641. At Ser-641 the chain carries Phosphoserine; by PKC/PRKCZ; alternate. At Thr-651 the chain carries Phosphothreonine; by PKC/PRKCZ. Residues 656–680 form a C2H2-type 2 zinc finger; sequence FMCTWSYCGKRFTRSDELQRHKRTH. A Phosphothreonine modification is found at Thr-668. Ser-670 is modified (phosphoserine; by PKC/PRKCZ). Thr-681 carries the phosphothreonine; by PKC/PRKCZ modification. The segment at 686 to 708 adopts a C2H2-type 3 zinc-finger fold; the sequence is FACPECPKRFMRSDHLSKHIKTH. Phosphoserine; alternate is present on residues Ser-698 and Ser-702. 2 O-linked (GlcNAc) serine; alternate glycosylation sites follow: Ser-698 and Ser-702. The residue at position 703 (Lys-703) is an N6-acetyllysine. Residues 708-785 form a domain D region; that stretch reads HQNKKGGPGV…QSINISGNGF (78 aa). At Thr-739 the chain carries Phosphothreonine; by MAPK1, MAPK3 and MAPK8.

This sequence belongs to the Sp1 C2H2-type zinc-finger protein family. Interacts with ATF7IP, ATF7IP2, BAHD1, POGZ, HCFC1, AATF and PHC2. Interacts with HLTF; the interaction may be required for basal transcriptional activity of HLTF. Interacts (deacetylated form) with EP300; the interaction enhances gene expression. Interacts with HDAC1 and JUN. Interacts with ELF1; the interaction is inhibited by glycosylation of SP1. Interaction with NFYA; the interaction is inhibited by glycosylation of SP1. Interacts with ATF7IP and TBP. Interacts with MEIS2 isoform 4 and PBX1 isoform PBX1a. Interacts with EGR1. Interacts with SMARCA4/BRG1. Interacts with RNF112 in an oxidative stress-regulated manner. Interacts with ZBTB7A; ZBTB7A prevents the binding to GC-rich motifs in promoters and represses the transcriptional activity of SP1. Interacts with DDX3X; this interaction potentiates SP1-induced CDKN1A/WAF1/CIP1 transcription. Interacts with MSX1; the interaction may inhibit MSX1 autoinactivation. As to quaternary structure, (Microbial infection) Interacts with varicella-zoster virus IE62 protein. In terms of assembly, (Microbial infection) Interacts with SV40 VP2/3 proteins. Interacts with SV40 major capsid protein VP1; this interaction leads to a cooperativity between the 2 proteins in DNA binding. (Microbial infection) Interacts with HIV-1 Vpr; the interaction is inhibited by SP1 O-glycosylation. Phosphorylated on multiple serine and threonine residues. Phosphorylation is coupled to ubiquitination, sumoylation and proteolytic processing. Phosphorylation on Ser-59 enhances proteolytic cleavage. Phosphorylation on Ser-7 enhances ubiquitination and protein degradation. Hyperphosphorylation on Ser-101 in response to DNA damage has no effect on transcriptional activity. MAPK1/MAPK3-mediated phosphorylation on Thr-453 and Thr-739 enhances VEGF transcription but, represses FGF2-triggered PDGFR-alpha transcription. Also implicated in the repression of RECK by ERBB2. Hyperphosphorylated on Thr-278 and Thr-739 during mitosis by MAPK8 shielding SP1 from degradation by the ubiquitin-dependent pathway. Phosphorylated in the zinc-finger domain by calmodulin-activated PKCzeta. Phosphorylation on Ser-641 by PKCzeta is critical for TSA-activated LHR gene expression through release of its repressor, p107. Phosphorylation on Thr-668, Ser-670 and Thr-681 is stimulated by angiotensin II via the AT1 receptor inducing increased binding to the PDGF-D promoter. This phosphorylation is increased in injured artey wall. Ser-59 and Thr-681 can both be dephosphorylated by PP2A during cell-cycle interphase. Dephosphorylation on Ser-59 leads to increased chromatin association during interphase and increases the transcriptional activity. On insulin stimulation, sequentially glycosylated and phosphorylated on several C-terminal serine and threonine residues. Post-translationally, acetylated. Acetylation/deacetylation events affect transcriptional activity. Deacetylation leads to an increase in the expression of the 12(s)-lipooxygenase gene through recruitment of p300 to the promoter. Deacetylated by HDAC6 which leads to increased expression of ENG and positive regulation of angiogenesis. In terms of processing, ubiquitinated. Ubiquitination occurs on the C-terminal proteolytically-cleaved peptide and is triggered by phosphorylation. Sumoylated with SUMO1. Sumoylation modulates proteolytic cleavage of the N-terminal repressor domain. Sumoylation levels are attenuated during tumorigenesis. Phosphorylation mediates SP1 desumoylation. Post-translationally, proteolytic cleavage in the N-terminal repressor domain is prevented by sumoylation. The C-terminal cleaved product is susceptible to degradation. In terms of processing, O-glycosylated; Contains 8 N-acetylglucosamine side chains. Levels are controlled by insulin and the SP1 phosphorylation states. Insulin-mediated O-glycosylation locates SP1 to the nucleus, where it is sequentially deglycosylated and phosphorylated. O-glycosylation affects transcriptional activity through disrupting the interaction with a number of transcription factors including ELF1 and NFYA. Also inhibits interaction with the HIV1 promoter. Inhibited by peroxisomome proliferator receptor gamma (PPARgamma). As to expression, up-regulated in adenocarcinomas of the stomach (at protein level). Isoform 3 is ubiquitously expressed at low levels.

It is found in the nucleus. The protein localises to the cytoplasm. In terms of biological role, transcription factor that can activate or repress transcription in response to physiological and pathological stimuli. Binds with high affinity to GC-rich motifs and regulates the expression of a large number of genes involved in a variety of processes such as cell growth, apoptosis, differentiation and immune responses. Highly regulated by post-translational modifications (phosphorylations, sumoylation, proteolytic cleavage, glycosylation and acetylation). Also binds the PDGFR-alpha G-box promoter. May have a role in modulating the cellular response to DNA damage. Implicated in chromatin remodeling. Plays an essential role in the regulation of FE65 gene expression. In complex with ATF7IP, maintains telomerase activity in cancer cells by inducing TERT and TERC gene expression. Isoform 3 is a stronger activator of transcription than isoform 1. Positively regulates the transcription of the core clock component BMAL1. Plays a role in the recruitment of SMARCA4/BRG1 on the c-FOS promoter. Plays a role in protecting cells against oxidative stress following brain injury by regulating the expression of RNF112. The sequence is that of Transcription factor Sp1 (SP1) from Homo sapiens (Human).